The following is a 77-amino-acid chain: Thioredoxin (77 aa).

Active-site nucleophile residues include Cys-11 and Cys-14. Cys-11 and Cys-14 are oxidised to a cystine.

Belongs to the glutaredoxin family.

Functionally, does not function as a glutathione-disulfide oxidoreductase in the presence of glutathione and glutathione reductase. Has low thioredoxin activity in vitro. The polypeptide is Thioredoxin (Methanothermobacter thermautotrophicus (strain ATCC 29096 / DSM 1053 / JCM 10044 / NBRC 100330 / Delta H) (Methanobacterium thermoautotrophicum)).